The following is a 196-amino-acid chain: Adenylate kinase (196 aa).

10–15 (GAGKGT) serves as a coordination point for ATP. The NMP stretch occupies residues 30–59 (STGDMLRAAVSAGTEIGKRAKAVMDAGGLV). Residues Thr-31, Arg-36, 57-59 (GLV), 85-88 (GYPR), and Gln-92 contribute to the AMP site. An LID region spans residues 126–142 (NRVAETIAAGGTVRSDD). Arg-127 lines the ATP pocket. The AMP site is built by Arg-139 and Arg-150. Residue Ala-178 participates in ATP binding.

It belongs to the adenylate kinase family. As to quaternary structure, monomer.

It localises to the cytoplasm. The enzyme catalyses AMP + ATP = 2 ADP. The protein operates within purine metabolism; AMP biosynthesis via salvage pathway; AMP from ADP: step 1/1. Functionally, catalyzes the reversible transfer of the terminal phosphate group between ATP and AMP. Plays an important role in cellular energy homeostasis and in adenine nucleotide metabolism. This is Adenylate kinase from Agrobacterium fabrum (strain C58 / ATCC 33970) (Agrobacterium tumefaciens (strain C58)).